A 358-amino-acid chain; its full sequence is Peptide chain release factor 1 (358 aa).

Q237 is subject to N5-methylglutamine.

Belongs to the prokaryotic/mitochondrial release factor family. Post-translationally, methylated by PrmC. Methylation increases the termination efficiency of RF1.

The protein localises to the cytoplasm. In terms of biological role, peptide chain release factor 1 directs the termination of translation in response to the peptide chain termination codons UAG and UAA. The sequence is that of Peptide chain release factor 1 from Streptomyces griseus subsp. griseus (strain JCM 4626 / CBS 651.72 / NBRC 13350 / KCC S-0626 / ISP 5235).